We begin with the raw amino-acid sequence, 534 residues long: MKEKLMRCIIERILKEYKEGKTLDKKRIEQIKSECLRIYRIGIGHPSNSEILKYATEEEKKILIPILRKKPVRTISGVAVVAVMTSPAKCPHGKCIFCPGGLDSVFGDVPQSYTGREPATMRGLMFNFDPYLQTRARIEQLEKVGHPTDKIELIIMGGTFPAREIEYQDWFIKRCLDAMNERESKSLEEAQKINETAKHRCVALCIETRPDYCSEKEINQMLKLGATRVELGVQSIYNEILKLCKRGHSVEDTIKATQLLKDSGLKVSYHLMPGMPGSSIEMDKKMFKEIFTNPDFMPDMVKIYPCLVIEGTELYEMWKRGEFKPYREEEAIEVISYAKSIMPKWVRTSRIQRDIPATVIVDGVKKSNLGELVYKYMEKKGLRCRCIRCREVGHVYYKKGILPDPEHIKLVREDYEASGGTEIFLSFEDVKNDILIAFLRLRDPYKPFRKEIDDKTMLVRQLHVFGWEKALTRDIKEVSWQHMGYGRMLMKEAERIAKEEFGKKKILVTSGIGVREYYRKLGYKRVGAYMGKEL.

Residues 70-330 (KPVRTISGVA…GEFKPYREEE (261 aa)) form a radical S-adenosyl-L-methionine (rSAM) region. The 272-residue stretch at 73–344 (RTISGVAVVA…ISYAKSIMPK (272 aa)) folds into the Radical SAM core domain. The [4Fe-4S] cluster site is built by Cys-90, Cys-95, and Cys-98. Lys-150 is an acetyl-CoA binding site. Cys-384 and Cys-389 are joined by a disulfide. Positions 387 to 534 (IRCREVGHVY…RVGAYMGKEL (148 aa)) constitute an N-acetyltransferase domain. Residues 461 to 464 (QLHV), 485 to 487 (YGR), and Tyr-518 each bind acetyl-CoA.

It belongs to the ELP3 family. Requires [4Fe-4S] cluster as cofactor.

The catalysed reaction is uridine(34) in tRNA + acetyl-CoA + S-adenosyl-L-methionine + H2O = 5-(carboxymethyl)uridine(34) in tRNA + 5'-deoxyadenosine + L-methionine + CoA + 2 H(+). The protein operates within tRNA modification. Its function is as follows. tRNA uridine(34) acetyltransferase, which mediates formation of carboxymethyluridine in the wobble base at position 34 in tRNAs. The proposed mechanism is the following: (i) recruits S-adenosyl-L-methionine and cleaves it to generate a 5'-deoxyadenosine radical (5'-dA) in the radical S-adenosyl-L-methionine (rSAM) region, (ii) hydrolyzes acetyl-CoA in the N-acetyltransferase domain and (iii) an acetyl radical is formed by the products of the two domains and (iv) is transferred onto the C5 position of uridine(34) in the bound tRNA molecule. Does not show protein lysine acetyltransferase activity. This Methanocaldococcus infernus (strain DSM 11812 / JCM 15783 / ME) protein is tRNA uridine(34) acetyltransferase.